The sequence spans 77 residues: MPGYTEYVLAEGSFSYGQAVAVITAYRNVFIQDDPGMHFRRVIRNAEGQRRWRCRNSEADAGKQLNAWLASGGLLRQ.

Belongs to the UPF0401 family.

The polypeptide is UPF0401 protein c3666 (Escherichia coli O6:H1 (strain CFT073 / ATCC 700928 / UPEC)).